A 377-amino-acid chain; its full sequence is TraB domain-containing protein (377 aa).

Met-1 is subject to N-acetylmethionine. The segment at 1–34 is disordered; the sequence is MEEPEEQPPHEADTEPVVTSGASEAVPRVLPGDP. Position 65 is a phosphothreonine (Thr-65).

This Bos taurus (Bovine) protein is TraB domain-containing protein (TRABD).